A 225-amino-acid polypeptide reads, in one-letter code: 3-dehydroquinate dehydratase (225 aa).

3-dehydroquinate-binding positions include S6, 30–32 (EWR), and R62. H118 (proton donor/acceptor) is an active-site residue. The Schiff-base intermediate with substrate role is filled by K143. 3-dehydroquinate-binding residues include R186, S205, and Q209.

The protein belongs to the type-I 3-dehydroquinase family. In terms of assembly, homodimer.

It catalyses the reaction 3-dehydroquinate = 3-dehydroshikimate + H2O. The protein operates within metabolic intermediate biosynthesis; chorismate biosynthesis; chorismate from D-erythrose 4-phosphate and phosphoenolpyruvate: step 3/7. Its function is as follows. Involved in the third step of the chorismate pathway, which leads to the biosynthesis of aromatic amino acids. Catalyzes the cis-dehydration of 3-dehydroquinate (DHQ) and introduces the first double bond of the aromatic ring to yield 3-dehydroshikimate. The polypeptide is 3-dehydroquinate dehydratase (Streptococcus pneumoniae (strain ATCC 700669 / Spain 23F-1)).